We begin with the raw amino-acid sequence, 383 residues long: 3-ketosteroid-9-alpha-monooxygenase, oxygenase component (383 aa).

The region spanning 24-126 (WHCLGPVKNF…TDVRGGLLFV (103 aa)) is the Rieske domain. [2Fe-2S] cluster-binding residues include cysteine 65, histidine 67, cysteine 84, and histidine 87. Fe cation contacts are provided by asparagine 173, histidine 179, histidine 184, and aspartate 302.

Homotrimer. The two-component system 3-ketosteroid-9-alpha-monooxygenase is composed of an oxygenase component KshA and a reductase component KshB. Requires [2Fe-2S] cluster as cofactor. Fe cation serves as cofactor.

It catalyses the reaction androsta-1,4-diene-3,17-dione + 2 reduced [2Fe-2S]-[ferredoxin] + O2 + 2 H(+) = 9alpha-hydroxyandrosta-1,4-diene-3,17-dione + 2 oxidized [2Fe-2S]-[ferredoxin] + H2O. The protein operates within lipid metabolism; steroid biosynthesis. Functionally, involved in the degradation of cholesterol. Catalyzes the introduction of a 9a-hydroxyl moiety into 1,4-androstadiene-3,17-dione (ADD) to yield the 9alpha-hydroxy-1,4-androstadiene-3,17-dione (9OHADD) intermediate which spontaneously form 3-hydroxy-9,10-seconandrost-1,3,5(10)-triene-9,17-dione (HSA) via the meta-cleavage of ring B with concomitant aromatization of ring A. In Mycolicibacterium smegmatis (strain ATCC 700084 / mc(2)155) (Mycobacterium smegmatis), this protein is 3-ketosteroid-9-alpha-monooxygenase, oxygenase component (kshA).